Consider the following 321-residue polypeptide: Malate dehydrogenase (321 aa).

NAD(+)-binding positions include 10–15 (GAGQIG) and Asp34. Arg83 and Arg89 together coordinate substrate. NAD(+) contacts are provided by residues Asn96 and 119–121 (ITN). Substrate-binding residues include Asn121 and Arg152. His176 acts as the Proton acceptor in catalysis.

Belongs to the LDH/MDH superfamily. MDH type 3 family.

The enzyme catalyses (S)-malate + NAD(+) = oxaloacetate + NADH + H(+). Functionally, catalyzes the reversible oxidation of malate to oxaloacetate. This chain is Malate dehydrogenase, found in Methylocella silvestris (strain DSM 15510 / CIP 108128 / LMG 27833 / NCIMB 13906 / BL2).